A 426-amino-acid chain; its full sequence is Proline--tRNA ligase (426 aa).

This sequence belongs to the class-II aminoacyl-tRNA synthetase family. ProS type 2 subfamily. Homodimer.

The protein localises to the cytoplasm. It carries out the reaction tRNA(Pro) + L-proline + ATP = L-prolyl-tRNA(Pro) + AMP + diphosphate. Functionally, catalyzes the attachment of proline to tRNA(Pro) in a two-step reaction: proline is first activated by ATP to form Pro-AMP and then transferred to the acceptor end of tRNA(Pro). The sequence is that of Proline--tRNA ligase from Rickettsia peacockii (strain Rustic).